A 199-amino-acid chain; its full sequence is Holliday junction branch migration complex subunit RuvA (199 aa).

Positions 1–64 (MIALLTGRLA…EDSISLFGFR (64 aa)) are domain I. Residues 65–143 (TLAEKEFFQL…KMDVAPSAQE (79 aa)) form a domain II region. A flexible linker region spans residues 144–154 (APSSEAPAEVA). The segment at 154–199 (ADDVASALVNLGYKEAVVRKVLAEMSIEPDASTEAVLRQALKVLMK) is domain III.

The protein belongs to the RuvA family. In terms of assembly, homotetramer. Forms an RuvA(8)-RuvB(12)-Holliday junction (HJ) complex. HJ DNA is sandwiched between 2 RuvA tetramers; dsDNA enters through RuvA and exits via RuvB. An RuvB hexamer assembles on each DNA strand where it exits the tetramer. Each RuvB hexamer is contacted by two RuvA subunits (via domain III) on 2 adjacent RuvB subunits; this complex drives branch migration. In the full resolvosome a probable DNA-RuvA(4)-RuvB(12)-RuvC(2) complex forms which resolves the HJ.

The protein resides in the cytoplasm. Its function is as follows. The RuvA-RuvB-RuvC complex processes Holliday junction (HJ) DNA during genetic recombination and DNA repair, while the RuvA-RuvB complex plays an important role in the rescue of blocked DNA replication forks via replication fork reversal (RFR). RuvA specifically binds to HJ cruciform DNA, conferring on it an open structure. The RuvB hexamer acts as an ATP-dependent pump, pulling dsDNA into and through the RuvAB complex. HJ branch migration allows RuvC to scan DNA until it finds its consensus sequence, where it cleaves and resolves the cruciform DNA. This Geobacter sulfurreducens (strain ATCC 51573 / DSM 12127 / PCA) protein is Holliday junction branch migration complex subunit RuvA.